The chain runs to 98 residues: Phosphoribosyl-ATP pyrophosphatase (98 aa).

It belongs to the PRA-PH family.

It is found in the cytoplasm. The catalysed reaction is 1-(5-phospho-beta-D-ribosyl)-ATP + H2O = 1-(5-phospho-beta-D-ribosyl)-5'-AMP + diphosphate + H(+). Its pathway is amino-acid biosynthesis; L-histidine biosynthesis; L-histidine from 5-phospho-alpha-D-ribose 1-diphosphate: step 2/9. The protein is Phosphoribosyl-ATP pyrophosphatase of Haloarcula marismortui (strain ATCC 43049 / DSM 3752 / JCM 8966 / VKM B-1809) (Halobacterium marismortui).